The primary structure comprises 322 residues: uncharacterized protein (322 aa).

Basic residues-rich tracts occupy residues 1–16 (MPGN…KSGT) and 43–61 (LRPH…RRPV). The tract at residues 1-69 (MPGNSRRRGA…PVKRADETET (69 aa)) is disordered. Residues Gly-261, Ile-281, and Leu-290 each contribute to the S-adenosyl-L-methionine site.

This sequence belongs to the class IV-like SAM-binding methyltransferase superfamily. RNA methyltransferase TrmH family.

This is an uncharacterized protein from Mycobacterium bovis (strain ATCC BAA-935 / AF2122/97).